A 402-amino-acid polypeptide reads, in one-letter code: Putative F-box/kelch-repeat protein At1g61540 (402 aa).

Positions 24-70 (PISIMSLPYDLLLNCFSLVSRLYYPTLSLVSKTFRSIITSRELYEIR) constitute an F-box domain. Kelch repeat units follow at residues 135-189 (NIYK…CEVD), 191-240 (KIYI…EVKS), and 246-293 (KIYM…VVDN).

This chain is Putative F-box/kelch-repeat protein At1g61540, found in Arabidopsis thaliana (Mouse-ear cress).